The chain runs to 489 residues: Fumarate reductase (CoM/CoB) subunit B (489 aa).

Residues 2 to 89 (INVKVLRFEP…GAVIEPVDLP (88 aa)) form the 2Fe-2S ferredoxin-type domain. 4 residues coordinate [2Fe-2S] cluster: Cys53, Cys58, Cys61, and Cys73. 4Fe-4S ferredoxin-type domains are found at residues 124–158 (PEDYQDTKKLRGCIECFSCISSCPVIKESTEYAGP) and 178–209 (AAGGVEEGLYCCTTCGKCAEVCPKELNVPGDA). The [4Fe-4S] cluster site is built by Cys136, Cys139, Cys142, Cys146, Cys189, Cys192, Cys195, and Cys199.

In terms of assembly, subunit B of the heterodimeric fumarate reductase of methanogenic Archaea, composed of subunits A (TfrA) and B (TfrB). [2Fe-2S] cluster is required as a cofactor. [4Fe-4S] cluster serves as cofactor.

It localises to the cytoplasm. It carries out the reaction coenzyme B + coenzyme M + fumarate = coenzyme M-coenzyme B heterodisulfide + succinate. Its function is as follows. Catalyzes the reduction of fumarate with reduced coenzyme M (CoM-S-H) and coenzyme B (CoB-S-H). In vitro, is able to reduces fumarate with reduced benzyl viologen, oxidize CoM-S-H and CoB-S-H to CoM-S-S-CoB with methylene blue, and reduce CoM-S-S-CoB with reduced benzyl viologen. The enzyme has specificity for the two thiol compounds as the CoB--CoM heterodisulfide reductase. The enzyme is very sensitive to oxygen. This chain is Fumarate reductase (CoM/CoB) subunit B, found in Methanothermobacter marburgensis (strain ATCC BAA-927 / DSM 2133 / JCM 14651 / NBRC 100331 / OCM 82 / Marburg) (Methanobacterium thermoautotrophicum).